Consider the following 65-residue polypeptide: Light-harvesting protein B800/830/1020 beta-2 chain (65 aa).

At 1 to 17 (TDIRTGLTDEECQEIHE) the chain is on the cytoplasmic side. A bacteriochlorophyll is bound by residues His-16 and Asn-34. The chain crosses the membrane as a helical span at residues 18–40 (MNMLGMHAYWSIGLIANALAYAW). At 41–65 (RPFHQGRAGNRLEDHAPDYVRSALT) the chain is on the periplasmic side.

It belongs to the antenna complex beta subunit family. In terms of assembly, the core complex is formed by different alpha and beta chains, binding bacteriochlorophyll molecules, and arranged most probably in tetrameric structures disposed around the reaction center. The non-pigmented gamma chains may constitute additional components.

It localises to the cell inner membrane. In terms of biological role, antenna complexes are light-harvesting systems, which transfer the excitation energy to the reaction centers. The protein is Light-harvesting protein B800/830/1020 beta-2 chain of Halorhodospira halochloris (Ectothiorhodospira halochloris).